The sequence spans 571 residues: Proline--tRNA ligase (571 aa).

The protein belongs to the class-II aminoacyl-tRNA synthetase family. ProS type 1 subfamily. As to quaternary structure, homodimer.

The protein resides in the cytoplasm. It carries out the reaction tRNA(Pro) + L-proline + ATP = L-prolyl-tRNA(Pro) + AMP + diphosphate. In terms of biological role, catalyzes the attachment of proline to tRNA(Pro) in a two-step reaction: proline is first activated by ATP to form Pro-AMP and then transferred to the acceptor end of tRNA(Pro). As ProRS can inadvertently accommodate and process non-cognate amino acids such as alanine and cysteine, to avoid such errors it has two additional distinct editing activities against alanine. One activity is designated as 'pretransfer' editing and involves the tRNA(Pro)-independent hydrolysis of activated Ala-AMP. The other activity is designated 'posttransfer' editing and involves deacylation of mischarged Ala-tRNA(Pro). The misacylated Cys-tRNA(Pro) is not edited by ProRS. The chain is Proline--tRNA ligase from Photobacterium profundum (strain SS9).